A 729-amino-acid polypeptide reads, in one-letter code: Fatty acid oxidation complex subunit alpha (729 aa).

Residues 1–189 are enoyl-CoA hydratase/isomerase; it reads MLYKGDTLYL…KIGLVDGVVA (189 aa). Aspartate 296 is a binding site for substrate. The interval 311–729 is 3-hydroxyacyl-CoA dehydrogenase; that stretch reads ETPKHAAVLG…ARPVGALKTA (419 aa). Residues methionine 324, aspartate 343, 400–402, lysine 407, and serine 429 contribute to the NAD(+) site; that span reads VVE. The active-site For 3-hydroxyacyl-CoA dehydrogenase activity is the histidine 450. Asparagine 453 is an NAD(+) binding site. Positions 500 and 660 each coordinate substrate.

This sequence in the N-terminal section; belongs to the enoyl-CoA hydratase/isomerase family. In the C-terminal section; belongs to the 3-hydroxyacyl-CoA dehydrogenase family. In terms of assembly, heterotetramer of two alpha chains (FadB) and two beta chains (FadA).

The enzyme catalyses a (3S)-3-hydroxyacyl-CoA + NAD(+) = a 3-oxoacyl-CoA + NADH + H(+). It catalyses the reaction a (3S)-3-hydroxyacyl-CoA = a (2E)-enoyl-CoA + H2O. The catalysed reaction is a 4-saturated-(3S)-3-hydroxyacyl-CoA = a (3E)-enoyl-CoA + H2O. It carries out the reaction (3S)-3-hydroxybutanoyl-CoA = (3R)-3-hydroxybutanoyl-CoA. The enzyme catalyses a (3Z)-enoyl-CoA = a 4-saturated (2E)-enoyl-CoA. It catalyses the reaction a (3E)-enoyl-CoA = a 4-saturated (2E)-enoyl-CoA. Its pathway is lipid metabolism; fatty acid beta-oxidation. Functionally, involved in the aerobic and anaerobic degradation of long-chain fatty acids via beta-oxidation cycle. Catalyzes the formation of 3-oxoacyl-CoA from enoyl-CoA via L-3-hydroxyacyl-CoA. It can also use D-3-hydroxyacyl-CoA and cis-3-enoyl-CoA as substrate. This chain is Fatty acid oxidation complex subunit alpha, found in Klebsiella pneumoniae (strain 342).